Consider the following 303-residue polypeptide: MADAASQVLLGSGLTILSQPLMYVKVLIQVGYEPLPPTIGRNIFGRQVCQLPGLFSYAQHIASIDGRRGLFTGLTPRLCSGVLGTVVHGKVLQHYQESDKGEELGPGNVQKEVSSSFDHVIKETTREMIARSAATLITHPFHVITLRSMVQFIGRESKYCGLCDSIITIYREEGILGFFAGLVPRLLGDILSLWLCNSLAYLVNTYALDSGVSTMNEMKSYSQAVTGFFASMLTYPFVLVSNLMAVNNCGLAGGCPPYSPIYTSWIDCWCMLQKEGNMSRGNSLFFRKVPFGKTYCCDLKMLI.

An N-acetylalanine modification is found at alanine 2. Over 2-15 (ADAASQVLLGSGLT) the chain is Mitochondrial intermembrane. Solcar repeat units lie at residues 2 to 98 (ADAA…YQES) and 118 to 206 (DHVI…VNTY). Residues 16–36 (ILSQPLMYVKVLIQVGYEPLP) traverse the membrane as a helical segment. The Cytoplasmic segment spans residues 37-77 (PTIGRNIFGRQVCQLPGLFSYAQHIASIDGRRGLFTGLTPR). Residues 78–92 (LCSGVLGTVVHGKVL) form a helical membrane-spanning segment. The Mitochondrial intermembrane segment spans residues 93-135 (QHYQESDKGEELGPGNVQKEVSSSFDHVIKETTREMIARSAAT). The chain crosses the membrane as a helical span at residues 136–156 (LITHPFHVITLRSMVQFIGRE). Residues 157-180 (SKYCGLCDSIITIYREEGILGFFA) lie on the Cytoplasmic side of the membrane. The helical transmembrane segment at 181–199 (GLVPRLLGDILSLWLCNSL) threads the bilayer. Topologically, residues 200–231 (AYLVNTYALDSGVSTMNEMKSYSQAVTGFFAS) are mitochondrial intermembrane. Residues 232–252 (MLTYPFVLVSNLMAVNNCGLA) traverse the membrane as a helical segment. Residues 253–280 (GGCPPYSPIYTSWIDCWCMLQKEGNMSR) are Cytoplasmic-facing. Residues 281–303 (GNSLFFRKVPFGKTYCCDLKMLI) traverse the membrane as a helical segment.

This sequence belongs to the mitochondrial carrier (TC 2.A.29) family. Interacts with p15BID.

The protein resides in the mitochondrion outer membrane. Functionally, protein insertase that mediates insertion of transmembrane proteins into the mitochondrial outer membrane. Catalyzes insertion of proteins with alpha-helical transmembrane regions, such as signal-anchored, tail-anchored and multi-pass membrane proteins. Does not mediate insertion of beta-barrel transmembrane proteins. Also acts as a receptor for the truncated form of pro-apoptotic BH3-interacting domain death agonist (p15 BID) and has therefore a critical function in apoptosis. Regulates the quiescence/cycling of hematopoietic stem cells (HSCs). Acts as a regulator of mitochondrial fusion, essential for the naive-to-primed interconversion of embryonic stem cells (ESCs). Acts as a regulator of lipid homeostasis and has a regulatory role in adipocyte differentiation and biology. The chain is Mitochondrial carrier homolog 2 from Homo sapiens (Human).